Consider the following 465-residue polypeptide: Cysteine--tRNA ligase (465 aa).

Cys27 serves as a coordination point for Zn(2+). Residues 29-39 (PTVYDDAHLGH) carry the 'HIGH' region motif. 3 residues coordinate Zn(2+): Cys207, His237, and Glu241. The 'KMSKS' region motif lies at 269-273 (KMSKS). Lys272 contacts ATP.

The protein belongs to the class-I aminoacyl-tRNA synthetase family. As to quaternary structure, monomer. Requires Zn(2+) as cofactor.

The protein localises to the cytoplasm. The enzyme catalyses tRNA(Cys) + L-cysteine + ATP = L-cysteinyl-tRNA(Cys) + AMP + diphosphate. The protein is Cysteine--tRNA ligase of Helicobacter acinonychis (strain Sheeba).